A 230-amino-acid chain; its full sequence is UPF0173 metal-dependent hydrolase MM_2300 (230 aa).

It belongs to the UPF0173 family.

In Methanosarcina mazei (strain ATCC BAA-159 / DSM 3647 / Goe1 / Go1 / JCM 11833 / OCM 88) (Methanosarcina frisia), this protein is UPF0173 metal-dependent hydrolase MM_2300.